A 353-amino-acid chain; its full sequence is Beta-hexosaminidase (353 aa).

Substrate-binding positions include D74, R82, R149, and 179–180 (KH). H192 serves as the catalytic Proton donor/acceptor. The Nucleophile role is filled by D263.

The protein belongs to the glycosyl hydrolase 3 family. NagZ subfamily.

The protein resides in the cytoplasm. It catalyses the reaction Hydrolysis of terminal non-reducing N-acetyl-D-hexosamine residues in N-acetyl-beta-D-hexosaminides.. Its pathway is cell wall biogenesis; peptidoglycan recycling. Its function is as follows. Plays a role in peptidoglycan recycling by cleaving the terminal beta-1,4-linked N-acetylglucosamine (GlcNAc) from peptide-linked peptidoglycan fragments, giving rise to free GlcNAc, anhydro-N-acetylmuramic acid and anhydro-N-acetylmuramic acid-linked peptides. The chain is Beta-hexosaminidase from Bordetella bronchiseptica (strain ATCC BAA-588 / NCTC 13252 / RB50) (Alcaligenes bronchisepticus).